The sequence spans 379 residues: Succinyl-diaminopimelate desuccinylase (379 aa).

His-68 serves as a coordination point for Zn(2+). Asp-70 is an active-site residue. Residue Asp-101 coordinates Zn(2+). Residue Glu-135 is the Proton acceptor of the active site. Zn(2+) is bound by residues Glu-136, Glu-164, and His-350.

It belongs to the peptidase M20A family. DapE subfamily. As to quaternary structure, homodimer. Requires Zn(2+) as cofactor. It depends on Co(2+) as a cofactor.

The catalysed reaction is N-succinyl-(2S,6S)-2,6-diaminopimelate + H2O = (2S,6S)-2,6-diaminopimelate + succinate. Its pathway is amino-acid biosynthesis; L-lysine biosynthesis via DAP pathway; LL-2,6-diaminopimelate from (S)-tetrahydrodipicolinate (succinylase route): step 3/3. Catalyzes the hydrolysis of N-succinyl-L,L-diaminopimelic acid (SDAP), forming succinate and LL-2,6-diaminopimelate (DAP), an intermediate involved in the bacterial biosynthesis of lysine and meso-diaminopimelic acid, an essential component of bacterial cell walls. This is Succinyl-diaminopimelate desuccinylase from Bordetella bronchiseptica (strain ATCC BAA-588 / NCTC 13252 / RB50) (Alcaligenes bronchisepticus).